The chain runs to 604 residues: Kinesin-like protein KIN-14O (604 aa).

The stretch at Met22–Lys61 forms a coiled coil. The Kinesin motor domain occupies Ser63–Ile387. Residue Gly141 to Thr148 coordinates ATP. The stretch at Arg383–Ala443 forms a coiled coil. Disordered stretches follow at residues Asp465–Leu511 and Ser565–Thr604. Over residues Ser565–Ala574 the composition is skewed to polar residues. A compositionally biased stretch (basic residues) spans Leu593–Thr604.

The protein belongs to the TRAFAC class myosin-kinesin ATPase superfamily. Kinesin family. KIN-14 subfamily.

This chain is Kinesin-like protein KIN-14O, found in Oryza sativa subsp. japonica (Rice).